A 302-amino-acid polypeptide reads, in one-letter code: Quinolinate synthase (302 aa).

Iminosuccinate contacts are provided by histidine 24 and serine 41. Cysteine 86 serves as a coordination point for [4Fe-4S] cluster. Residues 112–114 (YVN) and serine 129 contribute to the iminosuccinate site. A [4Fe-4S] cluster-binding site is contributed by cysteine 173. Residues 199-201 (HPE) and threonine 216 each bind iminosuccinate. [4Fe-4S] cluster is bound at residue cysteine 259.

This sequence belongs to the quinolinate synthase family. Type 2 subfamily. [4Fe-4S] cluster is required as a cofactor.

The protein resides in the cytoplasm. The catalysed reaction is iminosuccinate + dihydroxyacetone phosphate = quinolinate + phosphate + 2 H2O + H(+). Its pathway is cofactor biosynthesis; NAD(+) biosynthesis; quinolinate from iminoaspartate: step 1/1. Its function is as follows. Catalyzes the condensation of iminoaspartate with dihydroxyacetone phosphate to form quinolinate. The chain is Quinolinate synthase from Thermococcus onnurineus (strain NA1).